Consider the following 25-residue polypeptide: Ocellatin-P1 (25 aa).

At Leu-25 the chain carries Leucine amide.

Expressed by the skin glands.

It is found in the secreted. Its function is as follows. Antibacterial peptide that inhibits reference strains of both Gram-negative bacteria (E.coli, E.cloacae, K.pneumoniae, P.aeruginosa) and Gram-positive bacteria (S.aureus, S.epidermidis, E.faecalis, Streptococcus group B) with relatively low potencies (MIC=25-200 uM). The peptide shows very low hemolytic activity against human erythrocytes. Wheel projection demonstrates the amphipathicity of the alpha-helices is low which may explain the low antibacterial potency. This is Ocellatin-P1 from Leptodactylus pentadactylus (Smokey jungle frog).